We begin with the raw amino-acid sequence, 628 residues long: MESLVFARRSGPTPSAAELARPLAEGLIKSPKPLMKKQAVKRHHHKHNLRHRYEFLETLGKGTYGKVKKARESSGRLVAIKSIRKDKIKDEQDLMHIRREIEIMSSLNHPHIIAIHEVFENSSKIVIVMEYASRGDLYDYISERQQLSEREARHFFRQIVSAVHYCHQNRVVHRDLKLENILLDANGNIKIADFGLSNLYHQGKFLQTFCGSPLYASPEIVNGKPYTGPEVDSWSLGVLLYILVHGTMPFDGHDHKILVKQISNGAYREPPKPSDACGLIRWLLMVNPTRRATLEDVASHWWVNWGYATRVGEQEAPHEGGHPGSDSARASMADWLRRSSRPLLENGAKVCSFFKQHAPGGGSTTPGLERQHSLKKSRKENDMAQSLHSDTADDTAHRPGKSNLKLPKGILKKKVSASAEGAQEDPPELSPIPVSPGQAAPPLPKKGILKKPRQRESGYYSSPEPSESGELLDVGDVFVSGDPKEQKPPQASGLLLHRKGILKLNGKFSQTALELAAPTTFGSLDELAPPRPLARASRPSGAVSEDSILSSESFDQLDLPERLPEPPLRGCVSVDNLTGLEEPPSEGPGSCLRRWRQDPLGDSCFSLTDCQEVTATYRQALRVCSKLT.

M1 is modified (N-acetylmethionine). The Protein kinase domain maps to 53–303 (YEFLETLGKG…LEDVASHWWV (251 aa)). ATP-binding positions include 59 to 67 (LGKGTYGKV) and K81. D175 acts as the Proton acceptor in catalysis. T208 bears the Phosphothreonine mark. Disordered stretches follow at residues 355–492 (KQHA…PQAS) and 522–570 (GSLD…PLRG). The segment covering 428 to 444 (ELSPIPVSPGQAAPPLP) has biased composition (pro residues). S435 carries the post-translational modification Phosphoserine. Residues 457–469 (SGYYSSPEPSESG) are compositionally biased toward low complexity. S523, S544, S547, and S573 each carry phosphoserine.

It belongs to the protein kinase superfamily. CAMK Ser/Thr protein kinase family. SNF1 subfamily. Mg(2+) is required as a cofactor. Post-translationally, phosphorylated at Thr-208 by STK11/LKB1 in complex with STE20-related adapter-alpha (STRADA) pseudo kinase and CAB39. Autophosphorylation is also possible at Thr-208.

It carries out the reaction L-seryl-[protein] + ATP = O-phospho-L-seryl-[protein] + ADP + H(+). It catalyses the reaction L-threonyl-[protein] + ATP = O-phospho-L-threonyl-[protein] + ADP + H(+). Activated by phosphorylation on Thr-208. Stress-activated kinase involved in tolerance to glucose starvation. Induces cell-cell detachment by increasing F-actin conversion to G-actin. Expression is induced by CD95 or TNF-alpha, via NF-kappa-B. Protects cells from CD95-mediated apoptosis and is required for the increased motility and invasiveness of CD95-activated tumor cells. Phosphorylates LATS1 and LATS2. Plays a key role in neural tube closure during embryonic development through LATS2 phosphorylation and regulation of the nuclear localization of YAP1 a critical downstream regulatory target in the Hippo signaling pathway. The polypeptide is NUAK family SNF1-like kinase 2 (Pongo abelii (Sumatran orangutan)).